The chain runs to 116 residues: MGSAPAQIPTSFGHELRACLRCRLVKTYDQFRDAGCENCPFFKMEEDHERIVEVTTPNFNGIISVMDPSRSWAARWLRIGKFAPGCYTLAVSEPLPEEMQHLCQEERVQYVLPKRM.

Residues 19–39 (CLRCRLVKTYDQFRDAGCENC) form a C4-type zinc finger.

Belongs to the SPT4 family.

Its subcellular location is the nucleus. Its function is as follows. May regulate transcription elongation by RNA polymerase II. May enhance transcriptional pausing at sites proximal to the promoter, which may in turn facilitate the assembly of an elongation competent RNA polymerase II complex. This chain is Transcription elongation factor SPT4 homolog 2, found in Arabidopsis thaliana (Mouse-ear cress).